A 384-amino-acid chain; its full sequence is Sialyltransferase-like protein 3 (384 aa).

The Cytoplasmic segment spans residues 1 to 5 (MKRRH). A helical; Signal-anchor for type II membrane protein membrane pass occupies residues 6-26 (WSHPSCGLLLLVAVFCLLLVF). Residues 27-384 (RCSQLRHSGD…FRLPPVSFYR (358 aa)) lie on the Lumenal side of the membrane. A glycan (N-linked (GlcNAc...) asparagine) is linked at N241.

Belongs to the glycosyltransferase 29 family.

Its subcellular location is the golgi apparatus membrane. Possesses sialyltransferase-like activity in vitro. Transfers sialic acid to the glycoprotein asialofetuin. The transferred sialic acid is linked to galactose of Gal-beta-1,3-GalNAc through alpha-2,6-linkage. This chain is Sialyltransferase-like protein 3, found in Oryza sativa subsp. japonica (Rice).